Reading from the N-terminus, the 1465-residue chain is Neuropathy target esterase sws (1465 aa).

The Lumenal segment spans residues 1–34; the sequence is MDVLEMLRASASGSYNTIFSEAWCQYVSKQITAT. The helical transmembrane segment at 35-55 threads the bilayer; sequence MYMYCALGMMGVLFLAWFMYF. The Cytoplasmic portion of the chain corresponds to 56 to 1465; it reads KRMARLRLRD…RSSANNETKN (1410 aa). Position 174-301 (174-301) interacts with a nucleoside 3',5'-cyclic phosphate; the sequence is IFGHFEKPVF…IRVIQVIMIR (128 aa). Polar residues-rich tracts occupy residues 331 to 349 and 434 to 454; these read STMSGPINSQTSQSSRQTP and QQSVGNLSTRRSSITQMTPDG. Disordered regions lie at residues 331 to 421 and 434 to 460; these read STMS…TEVH and QQSVGNLSTRRSSITQMTPDGSHSCPP. Serine 446 and serine 455 each carry phosphoserine. Residues 484–611 and 600–727 contribute to the a nucleoside 3',5'-cyclic phosphate site; these read ELGL…VVRR and IVLD…LSHR. The 167-residue stretch at 954–1120 folds into the PNPLA domain; it reads LVLGGGGARG…VNNLPGHLWR (167 aa). Residues 958-963 carry the GXGXXG motif; the sequence is GGGARG. The GXSXG motif lies at 985–989; it reads GVSIG. The active-site Nucleophile is serine 987. Aspartate 1107 functions as the Proton acceptor in the catalytic mechanism. The DGA/G motif lies at 1107 to 1109; sequence DGG. The residue at position 1201 (serine 1201) is a Phosphoserine. The disordered stretch occupies residues 1371 to 1465; that stretch reads LERKTDKSTQ…RSSANNETKN (95 aa). Residues 1378–1390 show a composition bias toward low complexity; it reads STQSSPPTSSRTS. Residues 1392 to 1402 show a composition bias toward basic and acidic residues; the sequence is RGKEEARHMDN. The span at 1413–1424 shows a compositional bias: polar residues; it reads TGSGATEGIHTS. The span at 1447-1456 shows a compositional bias: basic and acidic residues; the sequence is VYKDEDKENR.

This sequence belongs to the NTE family. As to quaternary structure, interacts with Pka-C3; interaction inhibits the catalytic function of Pka-C3 and the esterase activity of sws.

The protein resides in the endoplasmic reticulum membrane. The enzyme catalyses a 1-acyl-sn-glycero-3-phosphocholine + H2O = sn-glycerol 3-phosphocholine + a fatty acid + H(+). Phospholipase B that deacylates intracellular phosphatidylcholine (PtdCho), generating glycerophosphocholine (GroPtdCho). This deacylation occurs at both sn-2 and sn-1 positions of PtdCho. Its specific chemical modification by certain organophosphorus (OP) compounds leads to distal axonopathy. Plays a role in the signaling mechanism between neurons and glia that regulates glia wrapping during development of the adult brain. Essential for membrane lipid homeostasis and cell survival in both neurons and glia of the adult brain. The protein is Neuropathy target esterase sws of Drosophila erecta (Fruit fly).